The primary structure comprises 120 residues: NAD(P)H-quinone oxidoreductase subunit 3 (120 aa).

3 helical membrane passes run 6–26 (GYDAFLGFLLISAAVPILALV), 64–84 (MFALVFVIFDVETVFLYPWAV), and 89–109 (LGLLAFIEALIFIAILLVALA).

It belongs to the complex I subunit 3 family. NDH-1 can be composed of about 15 different subunits; different subcomplexes with different compositions have been identified which probably have different functions.

It is found in the cellular thylakoid membrane. The enzyme catalyses a plastoquinone + NADH + (n+1) H(+)(in) = a plastoquinol + NAD(+) + n H(+)(out). It carries out the reaction a plastoquinone + NADPH + (n+1) H(+)(in) = a plastoquinol + NADP(+) + n H(+)(out). Functionally, NDH-1 shuttles electrons from an unknown electron donor, via FMN and iron-sulfur (Fe-S) centers, to quinones in the respiratory and/or the photosynthetic chain. The immediate electron acceptor for the enzyme in this species is believed to be plastoquinone. Couples the redox reaction to proton translocation, and thus conserves the redox energy in a proton gradient. Cyanobacterial NDH-1 also plays a role in inorganic carbon-concentration. The sequence is that of NAD(P)H-quinone oxidoreductase subunit 3 from Prochlorococcus marinus (strain MIT 9313).